The primary structure comprises 195 residues: Transmembrane protein 239 (195 aa).

2 helical membrane passes run 105–125 (LWGLEGILYLLLALMLCHALF) and 145–171 (HLLPALLLLVLSALPALLFTASFLLLF).

The protein resides in the membrane. This chain is Transmembrane protein 239 (TMEM239), found in Homo sapiens (Human).